A 154-amino-acid chain; its full sequence is Myoglobin (154 aa).

The Globin domain occupies 2-148; it reads GLSDGEWQLV…FRNDIAAKYK (147 aa). A Phosphoserine modification is found at serine 4. Histidine 65 lines the nitrite pocket. Histidine 65 lines the O2 pocket. A Phosphothreonine modification is found at threonine 68. Histidine 94 contacts heme b.

This sequence belongs to the globin family. As to quaternary structure, monomeric.

The protein resides in the cytoplasm. Its subcellular location is the sarcoplasm. It carries out the reaction Fe(III)-heme b-[protein] + nitric oxide + H2O = Fe(II)-heme b-[protein] + nitrite + 2 H(+). It catalyses the reaction H2O2 + AH2 = A + 2 H2O. In terms of biological role, monomeric heme protein which primary function is to store oxygen and facilitate its diffusion within muscle tissues. Reversibly binds oxygen through a pentacoordinated heme iron and enables its timely and efficient release as needed during periods of heightened demand. Depending on the oxidative conditions of tissues and cells, and in addition to its ability to bind oxygen, it also has a nitrite reductase activity whereby it regulates the production of bioactive nitric oxide. Under stress conditions, like hypoxia and anoxia, it also protects cells against reactive oxygen species thanks to its pseudoperoxidase activity. This Vulpes chama (Cape fox) protein is Myoglobin (MB).